Here is a 216-residue protein sequence, read N- to C-terminus: GTP cyclohydrolase-2 (216 aa).

51-55 is a binding site for GTP; the sequence is RIHSE. 3 residues coordinate Zn(2+): cysteine 56, cysteine 67, and cysteine 69. GTP is bound by residues glutamine 72, 94 to 96, and threonine 116; that span reads EGR. Aspartate 128 acts as the Proton acceptor in catalysis. The Nucleophile role is filled by arginine 130. Threonine 151 and lysine 156 together coordinate GTP.

The protein belongs to the GTP cyclohydrolase II family. Requires Zn(2+) as cofactor.

It carries out the reaction GTP + 4 H2O = 2,5-diamino-6-hydroxy-4-(5-phosphoribosylamino)-pyrimidine + formate + 2 phosphate + 3 H(+). The protein operates within cofactor biosynthesis; riboflavin biosynthesis; 5-amino-6-(D-ribitylamino)uracil from GTP: step 1/4. Functionally, catalyzes the conversion of GTP to 2,5-diamino-6-ribosylamino-4(3H)-pyrimidinone 5'-phosphate (DARP), formate and pyrophosphate. The polypeptide is GTP cyclohydrolase-2 (Haemophilus influenzae (strain 86-028NP)).